The sequence spans 289 residues: ATP synthase gamma chain (289 aa).

Belongs to the ATPase gamma chain family. In terms of assembly, F-type ATPases have 2 components, CF(1) - the catalytic core - and CF(0) - the membrane proton channel. CF(1) has five subunits: alpha(3), beta(3), gamma(1), delta(1), epsilon(1). CF(0) has three main subunits: a, b and c.

It is found in the cell membrane. Produces ATP from ADP in the presence of a proton gradient across the membrane. The gamma chain is believed to be important in regulating ATPase activity and the flow of protons through the CF(0) complex. The polypeptide is ATP synthase gamma chain (Mycoplasmopsis synoviae (strain 53) (Mycoplasma synoviae)).